The primary structure comprises 394 residues: Growth-regulating factor 4 (394 aa).

Residues 64 to 99 enclose the QLQ domain; that stretch reads PFTAAQYEELEQQALIYKYLVAGVPVPPDLVLPIRR. The region spanning 125-169 is the WRC domain; that stretch reads DPEPGRCRRTDGKKWRCSKEAAPDSKYCERHMHRGRNRSRKPVET. 2 consecutive short sequence motifs (bipartite nuclear localization signal) follow at residues 130-140 and 158-165; these read RCRRTDGKKWR and RGRNRSRK. A disordered region spans residues 156 to 180; sequence MHRGRNRSRKPVETQLVAQSQPPSS. Residues 170–180 are compositionally biased toward low complexity; sequence QLVAQSQPPSS.

It belongs to the GRF family. As to quaternary structure, interacts with GIF1. Interacts with GSK2. In terms of tissue distribution, expressed in stems. Expressed in panicles.

Its subcellular location is the nucleus. With respect to regulation, transactivation activity is repressed by GSK2. Transcription activator that plays a role in the regulation of meristematic function in leaves, stems and inflorescences. Transcription activator that plays a regulatory role in grain development. Positively regulates grain size by promoting cell division and expansion, leading to increased grain length and width. Positively regulates the expression of genes promoting cell proliferation. Activates the expression of expansin genes to promote cell expansion and grain size. May promote grain size by activating brassinosteroid responses. Component of a network formed by the microRNA396 (miRNA396), the GRFs and their interacting factors (GIFs) acting in the regulation of meristem function, at least partially through the control of cell proliferation. Component of the miRNA396c-GRF4-GIF1 regulatory module that plays an important role in grain size determination. In Oryza sativa subsp. japonica (Rice), this protein is Growth-regulating factor 4.